Reading from the N-terminus, the 84-residue chain is MENNEIQSVLMNALSLQEVHVSGDGSHFQVIAVGELFDGMSRVKKQQTVYGPLMEYIADNRIHAVSIKAYTPAEWARDRKLNGF.

The protein belongs to the BolA/IbaG family.

Its function is as follows. Involved in cell resistance against acid stress. This chain is Acid stress protein IbaG, found in Escherichia coli O6:H1 (strain CFT073 / ATCC 700928 / UPEC).